The following is a 540-amino-acid chain: GMP synthase [glutamine-hydrolyzing] (540 aa).

A Glutamine amidotransferase type-1 domain is found at 26–216; sequence IIIILDFGSQ…VYHICECEPT (191 aa). Residue Cys103 is the Nucleophile of the active site. Residues His190 and Glu192 contribute to the active site. A GMPS ATP-PPase domain is found at 217 to 415; that stretch reads WTTAAFVEEA…VGLPEEIVQR (199 aa). 244–250 is an ATP binding site; the sequence is SGGVDSS.

Homodimer.

It catalyses the reaction XMP + L-glutamine + ATP + H2O = GMP + L-glutamate + AMP + diphosphate + 2 H(+). Its pathway is purine metabolism; GMP biosynthesis; GMP from XMP (L-Gln route): step 1/1. Catalyzes the synthesis of GMP from XMP. The protein is GMP synthase [glutamine-hydrolyzing] of Trichormus variabilis (strain ATCC 29413 / PCC 7937) (Anabaena variabilis).